Consider the following 558-residue polypeptide: Formate--tetrahydrofolate ligase (558 aa).

66–73 is a binding site for ATP; the sequence is TPAGEGKT.

The protein belongs to the formate--tetrahydrofolate ligase family.

The enzyme catalyses (6S)-5,6,7,8-tetrahydrofolate + formate + ATP = (6R)-10-formyltetrahydrofolate + ADP + phosphate. It functions in the pathway one-carbon metabolism; tetrahydrofolate interconversion. In Clostridium kluyveri (strain NBRC 12016), this protein is Formate--tetrahydrofolate ligase.